Reading from the N-terminus, the 293-residue chain is MATH domain and coiled-coil domain-containing protein At3g58400 (293 aa).

In terms of domain architecture, MATH spans 3 to 126; the sequence is RSRSQNLITE…NGELKIVAEI (124 aa). A coiled-coil region spans residues 227–285; it reads KLDWLENKLYEVAQKKEDDEAGETRLREMEEKLKDLKLKCSKMEALVEEEKAKVSAAKA.

This Arabidopsis thaliana (Mouse-ear cress) protein is MATH domain and coiled-coil domain-containing protein At3g58400.